Consider the following 136-residue polypeptide: MSIIKEFREFAMRGNVVDLAVGVIIGAAFGKIVSSLVSDIIMPPLGLLIGGVDFKQLSLILRDAQGEIPAVVMNYGAFIQNIFDFVIVAFAIFIAIKLMNKMRRKQEDTPAAAPKPSAEEKLLAEIRDLLKEQHKQ.

2 helical membrane passes run 10 to 30 and 76 to 96; these read FAMR…AAFG and GAFI…FIAI.

This sequence belongs to the MscL family. Homopentamer.

The protein localises to the cell inner membrane. Functionally, channel that opens in response to stretch forces in the membrane lipid bilayer. May participate in the regulation of osmotic pressure changes within the cell. In Pectobacterium atrosepticum (strain SCRI 1043 / ATCC BAA-672) (Erwinia carotovora subsp. atroseptica), this protein is Large-conductance mechanosensitive channel.